A 142-amino-acid polypeptide reads, in one-letter code: Regulatory protein RecX (142 aa).

The protein belongs to the RecX family.

It localises to the cytoplasm. In terms of biological role, modulates RecA activity. This chain is Regulatory protein RecX, found in Thermus thermophilus (strain ATCC BAA-163 / DSM 7039 / HB27).